A 195-amino-acid chain; its full sequence is 3-isopropylmalate dehydratase small subunit (195 aa).

Belongs to the LeuD family. LeuD type 1 subfamily. As to quaternary structure, heterodimer of LeuC and LeuD.

It catalyses the reaction (2R,3S)-3-isopropylmalate = (2S)-2-isopropylmalate. It participates in amino-acid biosynthesis; L-leucine biosynthesis; L-leucine from 3-methyl-2-oxobutanoate: step 2/4. Catalyzes the isomerization between 2-isopropylmalate and 3-isopropylmalate, via the formation of 2-isopropylmaleate. In Rubrobacter xylanophilus (strain DSM 9941 / JCM 11954 / NBRC 16129 / PRD-1), this protein is 3-isopropylmalate dehydratase small subunit.